The following is a 1001-amino-acid chain: E3 ubiquitin-protein ligase etc-1 (1001 aa).

The 30-residue stretch at 28 to 57 (QEKAARKVQKFWRGHRVQHNQRLLFRAEFD) folds into the IQ domain. A coiled-coil region spans residues 66-115 (LEETIKMAQLLVNFYETNKDEERLVMTLSELVKLKTSDKEFEKRIRETQR). In terms of domain architecture, HECT spans 658–1001 (KVNDLKSMVR…INSGAGFELA (344 aa)). The active-site Glycyl thioester intermediate is the C969.

Interacts with ify-1 and cyb-1.

The catalysed reaction is S-ubiquitinyl-[E2 ubiquitin-conjugating enzyme]-L-cysteine + [acceptor protein]-L-lysine = [E2 ubiquitin-conjugating enzyme]-L-cysteine + N(6)-ubiquitinyl-[acceptor protein]-L-lysine.. The protein operates within protein modification; protein ubiquitination. E3 ubiquitin-protein ligase that accepts ubiquitin from E2 ubiquitin-conjugating enzymes, such as ubc-18, in the form of a thioester and then directly transfers the ubiquitin to targeted substrates. Ubiquitinates ify-1 and cyb-1 targeting them for degradation in post-meiotic embryos. This Caenorhabditis elegans protein is E3 ubiquitin-protein ligase etc-1.